Here is a 66-residue protein sequence, read N- to C-terminus: Large ribosomal subunit protein bL35 (66 aa).

The span at 1–26 shows a compositional bias: basic residues; that stretch reads MPKMKTHRGSAKRFKKTGSGKLKRSH. The interval 1–48 is disordered; sequence MPKMKTHRGSAKRFKKTGSGKLKRSHAYTSHLFANKSQKQKRKLRKSA.

This sequence belongs to the bacterial ribosomal protein bL35 family. Part of the 50S ribosomal subunit.

The protein is Large ribosomal subunit protein bL35 of Bacillus subtilis (strain 168).